The sequence spans 689 residues: Elongation factor G (689 aa).

The tr-type G domain maps to 8 to 282 (KKTRNIGIMA…AVIDYLPSPV (275 aa)). GTP contacts are provided by residues 17 to 24 (AHIDAGKT), 81 to 85 (DTPGH), and 135 to 138 (NKMD).

This sequence belongs to the TRAFAC class translation factor GTPase superfamily. Classic translation factor GTPase family. EF-G/EF-2 subfamily.

The protein localises to the cytoplasm. Its function is as follows. Catalyzes the GTP-dependent ribosomal translocation step during translation elongation. During this step, the ribosome changes from the pre-translocational (PRE) to the post-translocational (POST) state as the newly formed A-site-bound peptidyl-tRNA and P-site-bound deacylated tRNA move to the P and E sites, respectively. Catalyzes the coordinated movement of the two tRNA molecules, the mRNA and conformational changes in the ribosome. The polypeptide is Elongation factor G (Halothermothrix orenii (strain H 168 / OCM 544 / DSM 9562)).